The following is a 207-amino-acid chain: Protein lin-7 homolog B (207 aa).

The Kinase interacting site motif lies at 1–13 (MAALVEPLGLERD). Positions 10 to 65 (LERDVSRAVELLERLQRSGELPPQKLQALQRVLQSRFCSAIREVYEQLYDTLDITG) constitute an L27 domain. The PDZ domain maps to 93–175 (VVELPKTDEG…SVKLVVRYTP (83 aa)). Positions 187-207 (KMRSARRRQQHHSYTSLESRG) are disordered. Over residues 198 to 207 (HSYTSLESRG) the composition is skewed to polar residues.

The protein belongs to the lin-7 family. Forms a complex with CASK and CASKIN1. Component of the brain-specific heterotrimeric complex (LIN-10-LIN-2-LIN-7 complex) composed of at least APBA1, CASK, and LIN7, which associates with the motor protein KIF17 to transport vesicles along microtubules. Forms a heterotrimeric complex composed of MMP5, LIN7B and PATJ; the N-terminal L27 domain of PALS1 interacts with the L27 domain of PATJ and the C-terminal L27 domain of PALS1 interacts with the L27 domain of LIN7B. Forms a heterotrimeric complex with DLG1 and CASK via their L27 domains. Interacts with DLG4 and GRIN2B as well as CDH1 and CTNNB1, the channels KCNJ12/Kir2.2, KCNJ4/Kir2.3 and probably KCNJ2/Kir2.1 and SLC6A12/BGT-1 via its PDZ domain. The association of LIN7A with cadherin and beta-catenin is calcium-dependent, occurs at synaptic junctions and requires the actin cytoskeleton. Interacts with EGFR, ERBB2, ERBB3 and ERBB4 with both PDZ and KID domains. Associates with KIF17 via APBA1. Interacts with ASIC3. Interacts with TOPK. Interacts with RTKN. Interacts with APBA1. Interacts with MPP7. Interacts with DLG2. Interacts with DLG3. In terms of tissue distribution, expressed in the kidney; predominantly in the vasa recta.

Its subcellular location is the cell membrane. The protein resides in the basolateral cell membrane. The protein localises to the cell junction. It localises to the postsynaptic density membrane. It is found in the tight junction. In terms of biological role, plays a role in establishing and maintaining the asymmetric distribution of channels and receptors at the plasma membrane of polarized cells. Forms membrane-associated multiprotein complexes that may regulate delivery and recycling of proteins to the correct membrane domains. The tripartite complex composed of LIN7 (LIN7A, LIN7B or LIN7C), CASK and APBA1 associates with the motor protein KIF17 to transport vesicles containing N-methyl-D-aspartate (NMDA) receptor subunit NR2B along microtubules. This complex may have the potential to couple synaptic vesicle exocytosis to cell adhesion in brain. Ensures the proper localization of GRIN2B (subunit 2B of the NMDA receptor) to neuronal postsynaptic density and may function in localizing synaptic vesicles at synapses where it is recruited by beta-catenin and cadherin. Required to localize Kir2 channels, GABA transporter (SLC6A12) and EGFR/ERBB1, ERBB2, ERBB3 and ERBB4 to the basolateral membrane of epithelial cells. May increase the amplitude of ASIC3 acid-evoked currents by stabilizing the channel at the cell surface. The polypeptide is Protein lin-7 homolog B (Lin7b) (Mus musculus (Mouse)).